Here is a 352-residue protein sequence, read N- to C-terminus: UDP-N-acetylglucosamine--N-acetylmuramyl-(pentapeptide) pyrophosphoryl-undecaprenol N-acetylglucosamine transferase (352 aa).

The UDP-N-acetyl-alpha-D-glucosamine site is built by serine 195 and glutamine 287.

This sequence belongs to the glycosyltransferase 28 family. MurG subfamily.

It localises to the cell membrane. It catalyses the reaction Mur2Ac(oyl-L-Ala-gamma-D-Glu-L-Lys-D-Ala-D-Ala)-di-trans,octa-cis-undecaprenyl diphosphate + UDP-N-acetyl-alpha-D-glucosamine = beta-D-GlcNAc-(1-&gt;4)-Mur2Ac(oyl-L-Ala-gamma-D-Glu-L-Lys-D-Ala-D-Ala)-di-trans,octa-cis-undecaprenyl diphosphate + UDP + H(+). It participates in cell wall biogenesis; peptidoglycan biosynthesis. Functionally, cell wall formation. Catalyzes the transfer of a GlcNAc subunit on undecaprenyl-pyrophosphoryl-MurNAc-pentapeptide (lipid intermediate I) to form undecaprenyl-pyrophosphoryl-MurNAc-(pentapeptide)GlcNAc (lipid intermediate II). This Streptococcus pneumoniae serotype 19F (strain G54) protein is UDP-N-acetylglucosamine--N-acetylmuramyl-(pentapeptide) pyrophosphoryl-undecaprenol N-acetylglucosamine transferase.